Reading from the N-terminus, the 236-residue chain is Small ribosomal subunit protein uS2c (236 aa).

The protein belongs to the universal ribosomal protein uS2 family.

It localises to the plastid. It is found in the chloroplast. The chain is Small ribosomal subunit protein uS2c (rps2) from Nicotiana tabacum (Common tobacco).